A 597-amino-acid chain; its full sequence is Elongation factor 4 (597 aa).

Residues 2–184 form the tr-type G domain; the sequence is KHIRNFSIIA…KIVSAIPAPE (183 aa). Residues 14-19 and 131-134 each bind GTP; these read DHGKST and NKID.

This sequence belongs to the TRAFAC class translation factor GTPase superfamily. Classic translation factor GTPase family. LepA subfamily.

It is found in the cell inner membrane. The enzyme catalyses GTP + H2O = GDP + phosphate + H(+). In terms of biological role, required for accurate and efficient protein synthesis under certain stress conditions. May act as a fidelity factor of the translation reaction, by catalyzing a one-codon backward translocation of tRNAs on improperly translocated ribosomes. Back-translocation proceeds from a post-translocation (POST) complex to a pre-translocation (PRE) complex, thus giving elongation factor G a second chance to translocate the tRNAs correctly. Binds to ribosomes in a GTP-dependent manner. The chain is Elongation factor 4 from Vibrio vulnificus (strain CMCP6).